We begin with the raw amino-acid sequence, 952 residues long: Substrate-adhesion molecule (952 aa).

The signal sequence occupies residues 1 to 25 (MKSQKIGSMILLIGILLAIFNFAYS). Over 26 to 527 (DDDIERFSIN…TWFFDTNVET (502 aa)) the chain is Extracellular. 5 N-linked (GlcNAc...) asparagine glycosylation sites follow: N78, N182, N231, N243, and N412. The EGF-like domain maps to 438-471 (EIRRCKDSCNGYGTCNTANYTCVCDSAHMGETCN). Intrachain disulfides connect C442/C452, C446/C459, and C461/C470. A glycan (N-linked (GlcNAc...) asparagine) is linked at N456. The chain crosses the membrane as a helical span at residues 528–548 (GVIALACIFIAFVGILYIIDI). The Cytoplasmic segment spans residues 549 to 591 (GTTVPIDIKRAKDYAEENKSGQFPKATHEEASVLWWRDQRSHK). The helical transmembrane segment at 592-612 (AWTFMDQFQLISLVSHIGVVF) threads the bilayer. The Extracellular segment spans residues 613–678 (PSRFISFTEY…GDLYLLPNIL (66 aa)). Residues 679-699 (FWFGLLLGVFLVPLLLAYAII) form a helical membrane-spanning segment. Topologically, residues 700–722 (SFMESLIHWKEVVTNRLIHVLVR) are cytoplasmic. Residues 723 to 743 (ILTFGYIGVLIAASFAMVTPL) form a helical membrane-spanning segment. Topologically, residues 744–752 (HDYRIIIPG) are extracellular. The helical transmembrane segment at 753 to 773 (AIIFVLYGIGLPIAIWFLLAV) threads the bilayer. Residues 774-801 (PEARLHNPTFKQRFGCLYVHYKPKTDHR) lie on the Cytoplasmic side of the membrane. Residues 802–822 (FVVFMFIKRFIMAVIIGILSF) form a helical membrane-spanning segment. Residues 823–837 (KPMTNYPLTGTDLAV) are Extracellular-facing. A helical transmembrane segment spans residues 838-858 (PIVQVVVIDIALIGYAVLLFI). Residues 859 to 868 (RKPYFDHYQL) lie on the Cytoplasmic side of the membrane. A helical transmembrane segment spans residues 869 to 889 (WLEYLLTAINIVTVSLSLTHI). Topologically, residues 890 to 897 (KSPSAAGE) are extracellular. Residues 898–918 (LIACLIQALALVACIAAYVVA) form a helical membrane-spanning segment. The Cytoplasmic segment spans residues 919-952 (WLQMRSSFIKKVKKYLCCCCKSSKSSGEIDLSKK).

It is found in the cell membrane. Functionally, involved in substrate adhesion, myosin-independent cytokinesis, organization of actin cytoskeleton, and phagocytosis. This is Substrate-adhesion molecule (sadA) from Dictyostelium discoideum (Social amoeba).